The chain runs to 313 residues: Protoheme IX farnesyltransferase (313 aa).

8 consecutive transmembrane segments (helical) span residues 23–43 (ILAY…VTTI), 56–76 (PLLI…ANTL), 107–127 (LIFG…TANL), 128–148 (LSGL…TLVL), 155–175 (NVVW…SAVT), 182–202 (ALVM…ALAM), 243–263 (LALA…VWFL), and 291–311 (YLAV…PTLF).

Belongs to the UbiA prenyltransferase family. Protoheme IX farnesyltransferase subfamily.

It localises to the cell membrane. The catalysed reaction is heme b + (2E,6E)-farnesyl diphosphate + H2O = Fe(II)-heme o + diphosphate. Its pathway is porphyrin-containing compound metabolism; heme O biosynthesis; heme O from protoheme: step 1/1. In terms of biological role, converts heme B (protoheme IX) to heme O by substitution of the vinyl group on carbon 2 of heme B porphyrin ring with a hydroxyethyl farnesyl side group. This Mycobacteroides abscessus (strain ATCC 19977 / DSM 44196 / CCUG 20993 / CIP 104536 / JCM 13569 / NCTC 13031 / TMC 1543 / L948) (Mycobacterium abscessus) protein is Protoheme IX farnesyltransferase.